A 192-amino-acid chain; its full sequence is Interleukin-18 (192 aa).

Positions Met-1–Asp-35 are excised as a propeptide.

Belongs to the IL-1 family. As to quaternary structure, forms a ternary complex with ligand-binding receptor subunit IL18R1 and signaling receptor subunit IL18RAP at the plasma membrane. Mature IL18 first binds to IL18R1 forming a low affinity binary complex, which then interacts with IL18RAP to form a high affinity ternary complex that signals inside the cell. Interacts with cargo receptor TMED10; the interaction mediates the translocation from the cytoplasm into the ERGIC (endoplasmic reticulum-Golgi intermediate compartment) and thereby secretion. Post-translationally, the pro-IL-18 precursor is processed by CASP1, CASP4 or CASP5 to yield its mature, active form. The pro-IL-18 precursor features autoinhibitory interactions between the propeptide and the post-cleavage-site region, preventing recognition by the IL18R1 receptor. Processing by CASP1, CASP4 or CASP5 induces conformational changes to generate critical receptor-binding sites. The mature form is then secreted and released in the extracellular milieu by passing through the gasdermin-D (GSDMD) pore. In contrast, cleavage by CASP3 inactivates IL18.

Its subcellular location is the cytoplasm. It localises to the cytosol. It is found in the secreted. In terms of biological role, pro-inflammatory cytokine primarily involved in epithelial barrier repair, polarized T-helper 1 (Th1) cell and natural killer (NK) cell immune responses. Upon binding to IL18R1 and IL18RAP, forms a signaling ternary complex which activates NF-kappa-B, triggering synthesis of inflammatory mediators. Synergizes with IL12/interleukin-12 to induce IFNG synthesis from T-helper 1 (Th1) cells and natural killer (NK) cells. Involved in transduction of inflammation downstream of pyroptosis: its mature form is specifically released in the extracellular milieu by passing through the gasdermin-D (GSDMD) pore. The protein is Interleukin-18 (IL18) of Capra hircus (Goat).